A 1389-amino-acid polypeptide reads, in one-letter code: DNA-directed RNA polymerase subunit beta'' (1389 aa).

Zn(2+) is bound by residues C224, C295, C302, and C305.

Belongs to the RNA polymerase beta' chain family. RpoC2 subfamily. In terms of assembly, in plastids the minimal PEP RNA polymerase catalytic core is composed of four subunits: alpha, beta, beta', and beta''. When a (nuclear-encoded) sigma factor is associated with the core the holoenzyme is formed, which can initiate transcription. Zn(2+) serves as cofactor.

The protein resides in the plastid. It localises to the chloroplast. It carries out the reaction RNA(n) + a ribonucleoside 5'-triphosphate = RNA(n+1) + diphosphate. In terms of biological role, DNA-dependent RNA polymerase catalyzes the transcription of DNA into RNA using the four ribonucleoside triphosphates as substrates. The sequence is that of DNA-directed RNA polymerase subunit beta'' from Atropa belladonna (Belladonna).